Consider the following 256-residue polypeptide: Imidazole glycerol phosphate synthase subunit HisF (256 aa).

Active-site residues include Asp-11 and Asp-130.

Belongs to the HisA/HisF family. Heterodimer of HisH and HisF.

The protein localises to the cytoplasm. It catalyses the reaction 5-[(5-phospho-1-deoxy-D-ribulos-1-ylimino)methylamino]-1-(5-phospho-beta-D-ribosyl)imidazole-4-carboxamide + L-glutamine = D-erythro-1-(imidazol-4-yl)glycerol 3-phosphate + 5-amino-1-(5-phospho-beta-D-ribosyl)imidazole-4-carboxamide + L-glutamate + H(+). It functions in the pathway amino-acid biosynthesis; L-histidine biosynthesis; L-histidine from 5-phospho-alpha-D-ribose 1-diphosphate: step 5/9. In terms of biological role, IGPS catalyzes the conversion of PRFAR and glutamine to IGP, AICAR and glutamate. The HisF subunit catalyzes the cyclization activity that produces IGP and AICAR from PRFAR using the ammonia provided by the HisH subunit. The sequence is that of Imidazole glycerol phosphate synthase subunit HisF from Prochlorococcus marinus (strain NATL2A).